Here is a 54-residue protein sequence, read N- to C-terminus: Ovomucoid (54 aa).

The 51-residue stretch at V4–C54 folds into the Kazal-like domain. 3 cysteine pairs are disulfide-bonded: C6–C36, C14–C33, and C22–C54. An N-linked (GlcNAc...) asparagine glycan is attached at N43.

The protein resides in the secreted. This chain is Ovomucoid, found in Guira guira (Guira cuckoo).